The primary structure comprises 557 residues: uncharacterized protein (557 aa).

The stretch at 2–45 (NEDETSILNKKMEKIEVEMAEFERLGAEREKEAVERIVQEENQN) forms a coiled coil. Disordered stretches follow at residues 39–62 (VQEE…KSRK), 101–127 (NRTY…RKNF), 356–402 (PSPS…YPSN), and 536–557 (ANAT…YDHI). Polar residues-rich tracts occupy residues 101–110 (NRTYYKNSQG), 358–380 (PSFQ…SSNA), 390–400 (DSATYPTSIYP), and 536–548 (ANAT…NLDT).

The protein localises to the cytoplasm. Its subcellular location is the nucleus. This is an uncharacterized protein from Schizosaccharomyces pombe (strain 972 / ATCC 24843) (Fission yeast).